Here is a 513-residue protein sequence, read N- to C-terminus: Noroxomaritidine synthase 1 (513 aa).

Residues 18-34 (ILIAIACLVVFSLLRSA) form a helical membrane-spanning segment. Cysteine 458 is a heme binding site.

The protein belongs to the cytochrome P450 family. It depends on heme as a cofactor. As to expression, mostly expressed in stems, and, to a lower extent, in bulbs, roots, leaves and flowers.

It is found in the membrane. It catalyses the reaction 4'-O-methylnorbelladine + reduced [NADPH--hemoprotein reductase] + O2 = (10bR,4aS)-noroxomaritidine + oxidized [NADPH--hemoprotein reductase] + 2 H2O + H(+). It carries out the reaction 4'-O-methylnorbelladine + reduced [NADPH--hemoprotein reductase] + O2 = (10bS,4aR)-noroxomaritidine + oxidized [NADPH--hemoprotein reductase] + 2 H2O + H(+). Its pathway is alkaloid biosynthesis. In terms of biological role, cytochrome P450 that catalyzes an intramolecular para-para' C-C phenol coupling of 4'-O-methylnorbelladine in alkaloids biosynthesis, including haemanthamine- and crinamine-type alkaloids, promising anticancer agents. Catalyzes the formation of (10bR,4aS)-noroxomaritidine and (10bS,4aR)-noroxomaritidine from 4'-O-methylnorbelladine. This Narcissus pseudonarcissus (Daffodil) protein is Noroxomaritidine synthase 1.